Reading from the N-terminus, the 535-residue chain is CTP synthase (535 aa).

The amidoligase domain stretch occupies residues 1-270 (MSKNTKYVFV…DRLVCEKLGL (270 aa)). Residue serine 16 participates in CTP binding. Serine 16 provides a ligand contact to UTP. 17–22 (SLGKGI) contacts ATP. Position 57 (tyrosine 57) interacts with L-glutamine. ATP is bound at residue aspartate 74. Mg(2+)-binding residues include aspartate 74 and glutamate 144. Residues 151–153 (DIE), 191–196 (KTKPTQ), and lysine 227 contribute to the CTP site. UTP is bound by residues 191–196 (KTKPTQ) and lysine 227. The Glutamine amidotransferase type-1 domain maps to 295–535 (KIALVGKYVE…GFVGAALNNK (241 aa)). Glycine 357 provides a ligand contact to L-glutamine. Catalysis depends on cysteine 384, which acts as the Nucleophile; for glutamine hydrolysis. L-glutamine contacts are provided by residues 385–388 (LGMQ), glutamate 408, and arginine 465. Catalysis depends on residues histidine 510 and glutamate 512.

It belongs to the CTP synthase family. As to quaternary structure, homotetramer.

The catalysed reaction is UTP + L-glutamine + ATP + H2O = CTP + L-glutamate + ADP + phosphate + 2 H(+). The enzyme catalyses L-glutamine + H2O = L-glutamate + NH4(+). It catalyses the reaction UTP + NH4(+) + ATP = CTP + ADP + phosphate + 2 H(+). The protein operates within pyrimidine metabolism; CTP biosynthesis via de novo pathway; CTP from UDP: step 2/2. With respect to regulation, allosterically activated by GTP, when glutamine is the substrate; GTP has no effect on the reaction when ammonia is the substrate. The allosteric effector GTP functions by stabilizing the protein conformation that binds the tetrahedral intermediate(s) formed during glutamine hydrolysis. Inhibited by the product CTP, via allosteric rather than competitive inhibition. Its function is as follows. Catalyzes the ATP-dependent amination of UTP to CTP with either L-glutamine or ammonia as the source of nitrogen. Regulates intracellular CTP levels through interactions with the four ribonucleotide triphosphates. In Clostridium perfringens (strain ATCC 13124 / DSM 756 / JCM 1290 / NCIMB 6125 / NCTC 8237 / Type A), this protein is CTP synthase.